Reading from the N-terminus, the 652-residue chain is Chaperone protein HtpG (652 aa).

The interval 1-348 (MATDAHKETL…SDDLPLNVSR (348 aa)) is a; substrate-binding. Positions 349-565 (ELLQHNPLLD…EYDFGMGMQR (217 aa)) are b. The interval 566–652 (LLKAAGHAMP…EAKSNAARGD (87 aa)) is c.

The protein belongs to the heat shock protein 90 family. As to quaternary structure, homodimer.

It localises to the cytoplasm. Its function is as follows. Molecular chaperone. Has ATPase activity. The polypeptide is Chaperone protein HtpG (Alkalilimnicola ehrlichii (strain ATCC BAA-1101 / DSM 17681 / MLHE-1)).